The sequence spans 608 residues: Chaperone protein HtpG (608 aa).

The interval 1 to 332 (MQFQTEVNQL…VEDLPLNVSR (332 aa)) is a; substrate-binding. A b region spans residues 333-536 (EILQENQILK…KNKPDFAMQQ (204 aa)). The c stretch occupies residues 537 to 608 (LLKQMGQEQN…LTKIINKAFS (72 aa)).

Belongs to the heat shock protein 90 family. As to quaternary structure, homodimer.

The protein localises to the cytoplasm. In terms of biological role, molecular chaperone. Has ATPase activity. In Campylobacter jejuni (strain RM1221), this protein is Chaperone protein HtpG.